Consider the following 398-residue polypeptide: Acetate kinase (398 aa).

Position 7 (asparagine 7) interacts with Mg(2+). ATP is bound at residue lysine 14. Arginine 91 serves as a coordination point for substrate. Aspartate 148 (proton donor/acceptor) is an active-site residue. Residues 208–212 (HIGNG), 283–285 (DMR), and 331–335 (GVGEN) contribute to the ATP site. Mg(2+) is bound at residue glutamate 384.

Belongs to the acetokinase family. Homodimer. It depends on Mg(2+) as a cofactor. Mn(2+) is required as a cofactor.

The protein localises to the cytoplasm. It catalyses the reaction acetate + ATP = acetyl phosphate + ADP. It functions in the pathway metabolic intermediate biosynthesis; acetyl-CoA biosynthesis; acetyl-CoA from acetate: step 1/2. Functionally, catalyzes the formation of acetyl phosphate from acetate and ATP. Can also catalyze the reverse reaction. The protein is Acetate kinase of Bacteroides fragilis (strain ATCC 25285 / DSM 2151 / CCUG 4856 / JCM 11019 / LMG 10263 / NCTC 9343 / Onslow / VPI 2553 / EN-2).